The chain runs to 338 residues: Nicotinate-nucleotide--dimethylbenzimidazole phosphoribosyltransferase (338 aa).

Glutamate 306 (proton acceptor) is an active-site residue.

Belongs to the CobT family.

The catalysed reaction is 5,6-dimethylbenzimidazole + nicotinate beta-D-ribonucleotide = alpha-ribazole 5'-phosphate + nicotinate + H(+). It functions in the pathway nucleoside biosynthesis; alpha-ribazole biosynthesis; alpha-ribazole from 5,6-dimethylbenzimidazole: step 1/2. Functionally, catalyzes the synthesis of alpha-ribazole-5'-phosphate from nicotinate mononucleotide (NAMN) and 5,6-dimethylbenzimidazole (DMB). The sequence is that of Nicotinate-nucleotide--dimethylbenzimidazole phosphoribosyltransferase from Cereibacter sphaeroides (strain ATCC 17023 / DSM 158 / JCM 6121 / CCUG 31486 / LMG 2827 / NBRC 12203 / NCIMB 8253 / ATH 2.4.1.) (Rhodobacter sphaeroides).